Here is a 246-residue protein sequence, read N- to C-terminus: Receptor-transporting protein 4 (246 aa).

The Cytoplasmic segment spans residues 1 to 224; that stretch reads MVVDFWTWEQ…EKLGPSRDPD (224 aa). A 3CxxC-type zinc finger spans residues 48 to 159; it reads RAFGWFRCSS…DTANCEACTL (112 aa). A helical membrane pass occupies residues 225 to 245; it reads PLNICVFILLLVFIVVKCFTS.

It belongs to the TMEM7 family. Interacts with TASR16. Interacts with OPRD1 and OPRM1; the interaction promotes cell surface localization of the OPDR1-OPRM1 heterodimer. As to quaternary structure, (Microbial infection) Interacts with influenza A virus protein NS1; this interaction sequesters NS1 from interacting with RIG-I/DDX58 to restore antiviral signaling. As to expression, expressed in circumvallate papillae and testis.

It localises to the membrane. It is found in the cytoplasm. Chaperone protein that facilitates the trafficking and functional cell surface expression of some G-protein coupled receptors (GPCRs). Promotes functional expression of the bitter taste receptor TAS2R16. Also promotes functional expression of the opioid receptor heterodimer OPRD1-OPRM1. In addition, acts as a potent IFN-inducible suppressor of pathogens including lyssavirus rabies, influenza A or yellow fever virus. Mechanistically, associates with the viral replicase, binds viral RNA, and thereby suppresses viral genome amplification that replicates at the endoplasmic reticulum. In addition, restores antiviral signaling by interacting with and sequestering influenza A virus protein NS1. The chain is Receptor-transporting protein 4 (RTP4) from Homo sapiens (Human).